Reading from the N-terminus, the 186-residue chain is Membrane protein Rv1476 (186 aa).

A helical transmembrane segment spans residues 138 to 158; that stretch reads FPWSALTIVLLIGVLAAAVGA. Residues 166-186 are disordered; the sequence is RRSATSTDAAPGAGDDLNQGV.

The protein resides in the membrane. May affect the expression of genes linked to host macrophage apoptosis and immune response, thereby promoting the survival of M.tuberculosis in host macrophages. Overexpression of the gene increases susceptibility of the bacteria to various stresses, but promotes intracellular survival in host macrophages. It has no impact on the growth rate in vitro. Overexpression causes changes in the transcriptome of THP-1 cells, including expression of genes involved in cell proliferation, fatty acid degradation, cytokine-cytokine receptor interaction and immune response pathways. The protein is Membrane protein Rv1476 of Mycobacterium tuberculosis (strain ATCC 25618 / H37Rv).